A 121-amino-acid polypeptide reads, in one-letter code: Large ribosomal subunit protein bL17 (121 aa).

This sequence belongs to the bacterial ribosomal protein bL17 family. Part of the 50S ribosomal subunit. Contacts protein L32.

The protein is Large ribosomal subunit protein bL17 of Mycoplasmopsis agalactiae (strain NCTC 10123 / CIP 59.7 / PG2) (Mycoplasma agalactiae).